The sequence spans 87 residues: uncharacterized protein (87 aa).

The chain crosses the membrane as a helical span at residues 63–83 (IVLALVLGVFSLVGLIFIIYF).

The protein resides in the membrane. This is an uncharacterized protein from Dictyostelium discoideum (Social amoeba).